A 622-amino-acid polypeptide reads, in one-letter code: Prolactin receptor (622 aa).

The first 24 residues, 1-24 (MKENVASATVFTLLLFLNTCLLNG), serve as a signal peptide directing secretion. Topologically, residues 25-234 (QLPPGKPEIF…QIPSDFTMND (210 aa)) are extracellular. Fibronectin type-III domains are found at residues 27-128 (PPGK…VQPD) and 129-229 (PPLE…IPSD). Cysteines 36 and 46 form a disulfide. N59 carries N-linked (GlcNAc...) asparagine glycosylation. C75 and C86 are joined by a disulfide. The N-linked (GlcNAc...) asparagine glycan is linked to N104. Zn(2+)-binding residues include D211 and H212. The WSXWS motif signature appears at 215-219 (WSAWS). N-linked (GlcNAc...) asparagine glycosylation occurs at N233. Residues 235–258 (TTVWISVAVLSAVICLIIVWAVAL) form a helical membrane-spanning segment. The Cytoplasmic portion of the chain corresponds to 259–622 (KGYSMVTCIF…DPACFTHSFH (364 aa)). Residues 267 to 275 (IFPPVPGPK) carry the Box 1 motif motif. Disordered regions lie at residues 326–378 (MSVH…YDPE), 461–505 (SSQT…GSAK), and 520–545 (ALSLLPKQRENSGKPKKPGTPENNKE). Basic and acidic residues predominate over residues 466–486 (KSREEGKATQQREVESFHSET).

The protein belongs to the type I cytokine receptor family. Type 1 subfamily. Homodimer upon hormone binding. Interacts with SMARCA1. Interacts with GH1. Interacts with CSH. Interacts with NEK3 and VAV2 and this interaction is prolactin-dependent. Expressed in breast, placenta, kidney, liver and pancreas.

The protein resides in the membrane. The protein localises to the secreted. Its function is as follows. This is a receptor for the anterior pituitary hormone prolactin (PRL). Acts as a prosurvival factor for spermatozoa by inhibiting sperm capacitation through suppression of SRC kinase activation and stimulation of AKT. Isoform 4 is unable to transduce prolactin signaling. Isoform 6 is unable to transduce prolactin signaling. In Homo sapiens (Human), this protein is Prolactin receptor (PRLR).